The chain runs to 173 residues: Mediator of RNA polymerase II transcription subunit 10 (173 aa).

Residues 1–10 (MVQQQQQSQQ) are compositionally biased toward low complexity. The tract at residues 1–42 (MVQQQQQSQQRMMELHERNDREKLARKTEKEREEERRKQEDD) is disordered. A compositionally biased stretch (basic and acidic residues) spans 13–42 (MELHERNDREKLARKTEKEREEERRKQEDD).

Belongs to the Mediator complex subunit 10 family. In terms of assembly, component of the Mediator complex.

Its subcellular location is the nucleus. Component of the Mediator complex, a coactivator involved in the regulated transcription of nearly all RNA polymerase II-dependent genes. Mediator functions as a bridge to convey information from gene-specific regulatory proteins to the basal RNA polymerase II transcription machinery. Mediator is recruited to promoters by direct interactions with regulatory proteins and serves as a scaffold for the assembly of a functional preinitiation complex with RNA polymerase II and the general transcription factors. Required for germ cell development and for transcriptional activation of certain stage-specific inducible promoters. The sequence is that of Mediator of RNA polymerase II transcription subunit 10 (mdt-10) from Caenorhabditis elegans.